The sequence spans 1035 residues: Cell-division control histidine kinase PdhS (1035 aa).

Residues 1–613 (MSGSYPFIDI…HADGSEEPVD (613 aa)) form an important for polar localization region. The segment at 500 to 533 (QGLANTRAESETPVSETSSIEPVEPTPPVKTRSE) is disordered. Positions 614 to 1035 (AHLNAIAWRG…VFPPTRVLAD (422 aa)) are interaction with DivK. Residues 659 to 730 (HVEELKTILD…YLHGLSGNGV (72 aa)) form the PAS domain. The Histidine kinase domain maps to 802–1031 (RISHEIRTPL…VVEIVFPPTR (230 aa)). The residue at position 805 (His-805) is a Phosphohistidine; by autocatalysis.

In terms of assembly, interacts with DivK.

The protein localises to the cytoplasm. The enzyme catalyses ATP + protein L-histidine = ADP + protein N-phospho-L-histidine.. Functions as a polar differentiation marker. Essential protein that, by localizing in the old pole of dividing cells, controls cell division and maturation, probably through control of DivK phosphorylation status and cellular distribution, which in turn regulates CtrA, a transcriptional regulator of the minB operon. The asymmetrical localization of this protein is probably required for cells to enter a new division cycle. The polypeptide is Cell-division control histidine kinase PdhS (pdhS) (Brucella abortus (strain S19)).